The following is a 409-amino-acid chain: Putative protein disulfide-isomerase DDB_G0275025 (409 aa).

Positions 1 to 21 (MKLINICIFIFAIICIESTFG) are cleaved as a signal peptide. The 113-residue stretch at 28-140 (NVINLTKKNF…AKFSLAKLPS (113 aa)) folds into the Thioredoxin domain. The cysteines at positions 57 and 60 are disulfide-linked. The disordered stretch occupies residues 245-273 (SNNDNNNNNNNNNNEESTKTTTTEKDPAS). Positions 247–259 (NDNNNNNNNNNNE) are enriched in low complexity. The span at 260–273 (ESTKTTTTEKDPAS) shows a compositional bias: basic and acidic residues. The Prevents secretion from ER motif lies at 406 to 409 (KDEL).

This sequence belongs to the protein disulfide isomerase family.

Its subcellular location is the endoplasmic reticulum lumen. It carries out the reaction Catalyzes the rearrangement of -S-S- bonds in proteins.. This Dictyostelium discoideum (Social amoeba) protein is Putative protein disulfide-isomerase DDB_G0275025.